We begin with the raw amino-acid sequence, 186 residues long: Ribosome-recycling factor (186 aa).

Belongs to the RRF family.

It localises to the cytoplasm. In terms of biological role, responsible for the release of ribosomes from messenger RNA at the termination of protein biosynthesis. May increase the efficiency of translation by recycling ribosomes from one round of translation to another. This is Ribosome-recycling factor from Rickettsia felis (strain ATCC VR-1525 / URRWXCal2) (Rickettsia azadi).